The sequence spans 219 residues: Transmembrane emp24 domain-containing protein 10 (219 aa).

Positions 1-31 (MSGLSGPPTRRGPFPLALLLLFLLGPSLVLA) are cleaved as a signal peptide. Residues 1–142 (MSGLSGPPTR…KNYEEIAKVE (142 aa)) are required for interaction with STX17. Residues 32–185 (ISFHLPINSR…RDTNESTNTR (154 aa)) are Lumenal-facing. One can recognise a GOLD domain in the interval 41–193 (RKCLREEIHK…TRVLYFSIFS (153 aa)). Residues R171 and R176 each carry the dimethylated arginine modification. N179 carries N-linked (GlcNAc...) asparagine glycosylation. A helical transmembrane segment spans residues 186–206 (VLYFSIFSMFCLIGLATWQVF). Residues 204–219 (QVFYLRRFFKAKKLIE) form an interaction with COPG1 region. At 207-219 (YLRRFFKAKKLIE) the chain is on the cytoplasmic side. The segment at 207–219 (YLRRFFKAKKLIE) is interaction with ARF1 and IL1B. A COPII vesicle coat-binding motif is present at residues 211–212 (FF). The COPI vesicle coat-binding motif lies at 211-219 (FFKAKKLIE).

This sequence belongs to the EMP24/GP25L family. As to quaternary structure, predominantly dimeric and to a lesser extent monomeric in the ER. Monomer and dimer in ERGIC and cis-Golgi network. Forms homooligomer (via GOLD domain); the assembly is promoted by direct binding with leaderless cargos and may form a protein channel that facilitates cargo entry into the ERGIC. Forms heterooligomeric complexes with other members of the p24 family such as TMED2, TMED7 and TMED9. Interacts (via GOLD domain) with TMED2 (via GOLD domain); the complex is required for export of TMED10 from the ER to the cis-Golgi network; the complex is proposed to be involved in cis-Golgi network dynamics and / or biogenesis. Associates with the COPI vesicle coat subunits (coatomer). Tetramerization of the cytoplasmic domain at the Golgi membrane in vitro; the complex is proposed to interact with COPI coatomer and induce budding of the vesicles. Interacts with COPG1; the interaction involves TMED10 homodimer. Interacts with ARF1 (GDP-bound); the interaction probably involves a TMED10 oligomer. Interacts with SEC23A, SEC24B, SEC24C and SEC24D components of the coat protein complex II/COPII, indicative of an association of TMED10 with the COPII vesicle coat. Interacts with CD59. Interacts with MPPE1/PGAP5; the complex might recruit and sort GPI-anchored proteins to the ER-exit site, or the interaction might lead to recycling of PGAP5 between the ER and the Golgi. Interacts with F2LR1/PAR2. Interacts with KDELR2/ERD2; the interaction is disrupted by KDELR2 ligand. Found in a complex composed at least of SURF4, TMED2 and TMED10. Associates with the presenilin-dependent gamma-secretase complex. Interacts with STX17; the interaction is direct. Interacts with IL-1; the interaction is direct. Interacts with RAB21 (active GTP-bound form); the interaction is indirect and regulates TMED10 abundance and localization at the Golgi.

The protein localises to the endoplasmic reticulum membrane. The protein resides in the endoplasmic reticulum-Golgi intermediate compartment membrane. It is found in the golgi apparatus membrane. Its subcellular location is the golgi apparatus. It localises to the cis-Golgi network membrane. The protein localises to the trans-Golgi network membrane. The protein resides in the cytoplasmic vesicle. It is found in the secretory vesicle membrane. Its subcellular location is the cell membrane. It localises to the melanosome. In terms of biological role, cargo receptor involved in protein vesicular trafficking and quality control in the endoplasmic reticulum (ER) and Golgi. The p24 protein family is a group of transmembrane proteins that bind coat protein complex I/COPI and coat protein complex II/COPII involved in vesicular trafficking between the membranes. Acts at the lumenal side for incorporation of secretory cargo molecules into transport vesicles and involved in vesicle coat formation at the cytoplasmic side. Mainly functions in the early secretory pathway and cycles between the ER, ER-Golgi intermediate compartment (ERGIC) and Golgi, mediating cargo transport through COPI and COPII-coated vesicles. In COPII vesicle-mediated anterograde transport, involved in the transport of GPI-anchored proteins by acting together with TMED2 as their cargo receptor; the function specifically implies SEC24C and SEC24D of the COPII vesicle coat and lipid raft-like microdomains of the ER. Recognizes GPI anchors structural remodeled in the ER by the GPI inositol-deacylase/PGAP1 and the metallophosphoesterase MPPE1/PGAP5. In COPI vesicle-mediated retrograde transport, involved in the biogenesis of COPI vesicles and vesicle coat recruitment. Involved in trafficking of amyloid beta A4 protein and soluble APP-beta release (independent from the modulation of gamma-secretase activity). Involved in the KDELR2-mediated retrograde transport of the toxin A subunit (CTX-A-K63)together with COPI and the COOH terminus of KDELR2. On Golgi membranes, acts as a primary receptor for ARF1-GDP, a GTP-binding protein involved in COPI-vesicle formation. Increases coatomer-dependent GTPase-activating activity of ARFGAP2 which mediates the hydrolysis of ARF1-bound GTP and therefore modulates protein trafficking from the Golgi apparatus. Involved in the exocytic trafficking of G protein-coupled receptors F2LR1/PAR2 (trypsin and tryspin-like enzyme receptor), OPRM1 (opioid receptor) and P2RY4 (UTD and UDP receptor) from the Golgi to the plasma membrane, thus contributing to receptor resensitization. In addition to its cargo receptor activity, may also act as a protein channel after oligomerization, facilitating the post-translational entry of leaderless cytoplasmic cargo into the ERGIC. Involved in the translocation into ERGIC, the vesicle entry and the secretion of leaderless cargos (lacking the secretion signal sequence), including the mature form of interleukin 1/IL-1 family members, the alpha-crystallin B chain HSPB5, the carbohydrate-binding proteins galectin-1/LGALS1 and galectin-3/LGALS3, the microtubule-associated protein Tau/MAPT, and the annexin A1/ANXA1; the translocation process is dependent on cargo protein unfolding and enhanced by chaperones HSP90AB1 and HSP90B1/GRP9. Could also associates with the presenilin-dependent gamma-secretase complex in order to regulate gamma-cleavages of the amyloid beta A4 protein to yield amyloid-beta 40/Abeta40. The chain is Transmembrane emp24 domain-containing protein 10 (TMED10) from Pongo abelii (Sumatran orangutan).